A 132-amino-acid chain; its full sequence is Small ribosomal subunit protein uS8 (132 aa).

It belongs to the universal ribosomal protein uS8 family. As to quaternary structure, part of the 30S ribosomal subunit. Contacts proteins S5 and S12.

One of the primary rRNA binding proteins, it binds directly to 16S rRNA central domain where it helps coordinate assembly of the platform of the 30S subunit. In Lactobacillus acidophilus (strain ATCC 700396 / NCK56 / N2 / NCFM), this protein is Small ribosomal subunit protein uS8.